We begin with the raw amino-acid sequence, 280 residues long: RAD52 motif-containing protein 1 (280 aa).

Positions 18–101 constitute an RRM domain; the sequence is KTIFIWDIQP…SPLKVRLSTK (84 aa).

Homodimer.

The protein resides in the nucleus. Its subcellular location is the cytoplasm. It localises to the nucleolus. Its function is as follows. May confer resistance to the antitumor agent cisplatin. Binds to DNA and RNA. This is RAD52 motif-containing protein 1 (rdm1) from Danio rerio (Zebrafish).